Consider the following 59-residue polypeptide: Sperm protamine P1-type (59 aa).

The segment at 1-59 (MARYRRNRSRSRSRRRRRRRGGRGGRRGRRRRRHGQRRRGRRGRERTRRRRRRRRRSSS) is disordered.

Belongs to the protamine P1 family. In terms of tissue distribution, testis.

Its subcellular location is the nucleus. The protein localises to the chromosome. Protamines substitute for histones in the chromatin of sperm during the haploid phase of spermatogenesis. They compact sperm DNA into a highly condensed, stable and inactive complex. This chain is Sperm protamine P1-type, found in Chrysemys picta bellii (Western painted turtle).